The chain runs to 402 residues: Phosphoglycerate kinase (402 aa).

Substrate-binding positions include 24 to 26 (DFN), arginine 40, 63 to 66 (HFGR), arginine 122, and arginine 155. ATP is bound by residues lysine 206, glycine 297, glutamate 328, and 357 to 360 (GGDS).

Belongs to the phosphoglycerate kinase family. Monomer.

The protein resides in the cytoplasm. It carries out the reaction (2R)-3-phosphoglycerate + ATP = (2R)-3-phospho-glyceroyl phosphate + ADP. Its pathway is carbohydrate degradation; glycolysis; pyruvate from D-glyceraldehyde 3-phosphate: step 2/5. This is Phosphoglycerate kinase from Synechococcus sp. (strain WH7803).